An 828-amino-acid chain; its full sequence is Translation initiation factor IF-2 (828 aa).

2 disordered regions span residues 48–76 (SYSGSTTTLSLNKEKGSLETGSSSGSEEF) and 112–148 (ASQEDPIEVEQEESSDTNKVKEEPKIEEVKDIEESTL). Over residues 49 to 58 (YSGSTTTLSL) the composition is skewed to polar residues. The span at 65–74 (LETGSSSGSE) shows a compositional bias: low complexity. The segment covering 116-126 (DPIEVEQEESS) has biased composition (acidic residues). Residues 127–144 (DTNKVKEEPKIEEVKDIE) are compositionally biased toward basic and acidic residues. Residues 326 to 496 (SRAPVVTVMG…LLIAEMQNLK (171 aa)) form the tr-type G domain. The G1 stretch occupies residues 335–342 (GHVDHGKT). 335 to 342 (GHVDHGKT) is a GTP binding site. The segment at 360–364 (GITQH) is G2. The interval 382-385 (DTPG) is G3. GTP contacts are provided by residues 382 to 386 (DTPGH) and 436 to 439 (NKID). The interval 436-439 (NKID) is G4. The segment at 472-474 (SAL) is G5.

The protein belongs to the TRAFAC class translation factor GTPase superfamily. Classic translation factor GTPase family. IF-2 subfamily.

It is found in the cytoplasm. In terms of biological role, one of the essential components for the initiation of protein synthesis. Protects formylmethionyl-tRNA from spontaneous hydrolysis and promotes its binding to the 30S ribosomal subunits. Also involved in the hydrolysis of GTP during the formation of the 70S ribosomal complex. The polypeptide is Translation initiation factor IF-2 (Rickettsia bellii (strain OSU 85-389)).